Consider the following 110-residue polypeptide: Small ribosomal subunit protein mS33 (110 aa).

The segment covering 84–95 (KRRGKGAPKKMK) has biased composition (basic residues). A disordered region spans residues 84–110 (KRRGKGAPKKMKKDAAATAKGKGKKKK).

Belongs to the mitochondrion-specific ribosomal protein mS33 family. In terms of assembly, component of the mitochondrial small ribosomal subunit (mt-SSU). Mature yeast 74S mitochondrial ribosomes consist of a small (37S) and a large (54S) subunit. The 37S small subunit contains a 15S ribosomal RNA (15S mt-rRNA) and 34 different proteins. The 54S large subunit contains a 21S rRNA (21S mt-rRNA) and 46 different proteins.

Its subcellular location is the mitochondrion. Component of the mitochondrial ribosome (mitoribosome), a dedicated translation machinery responsible for the synthesis of mitochondrial genome-encoded proteins, including at least some of the essential transmembrane subunits of the mitochondrial respiratory chain. The mitoribosomes are attached to the mitochondrial inner membrane and translation products are cotranslationally integrated into the membrane. The sequence is that of Small ribosomal subunit protein mS33 (RSM27) from Saccharomyces cerevisiae (strain ATCC 204508 / S288c) (Baker's yeast).